The sequence spans 321 residues: Cyclic AMP-AMP-AMP synthase (321 aa).

Lys63 is an ATP binding site. Asp72 and Asp74 together coordinate Mg(2+). ATP is bound by residues Asp74, His162, Lys185, 201–203 (KSF), and Asn270.

The protein belongs to the CD-NTase family. A01 subfamily. Forms complexes with Cap7 with 1:1 and 2:2 stoichimetry, and a 1:1:6 CdnC:Cap7:Cap6 complex. It depends on Mg(2+) as a cofactor.

The catalysed reaction is 3 ATP = 3',3',3'-c-tri-AMP + 3 diphosphate. It carries out the reaction 2 ATP = 3',3'-c-di-AMP + 2 diphosphate. With respect to regulation, the 2:2 CdnC:Cap7 (Cap7 is also called HORMA) complex is activated for cAAA synthesis by long dsDNA, but not 40 bp dsDNA or ssDNA; the 1:1 complex is inactive in vitro. The 2:2:DNA complex is catalytically disassembled and inactivated by Cap6 (also called Trip13). Cyclic nucleotide synthase (second messenger synthase) of a CBASS antivirus system. CBASS (cyclic oligonucleotide-based antiphage signaling system) provides immunity against bacteriophage. The CD-NTase protein synthesizes cyclic nucleotides in response to infection; these serve as specific second messenger signals. The signals activate a diverse range of effectors, leading to bacterial cell death and thus abortive phage infection. A type III-C(AAA) CBASS system. In terms of biological role, cyclic nucleotide synthase that upon activation catalyzes the synthesis of 3',3',3'-cyclic AMP-AMP-AMP (3',3',3'-c-tri-AMP or cAAA) as the major product, and 3',3'-c-di-AMP as a minor product. Cannot use GTP as a substrate. Its function is as follows. Protects E.coli strain JP313 against bacteriophage lambda cI- infection. When the cdnC-cap7-cap6-nucC operon is transformed into a susceptible strain it confers bacteriophage immunity. Mutations in the sensor (Cap7 also called HORMA) or effector proteins (CdnC, NucC) but not the disassembly protein (Cap6 also called Trip13) no longer confer immunity. The presence of the intact operon leads to culture collapse and cell death, which occurs before the phage has finished its replication cycle, thus protecting non-infected bacteria by aborting the phage infection and preventing its propagation. The chain is Cyclic AMP-AMP-AMP synthase from Escherichia coli (strain MS 115-1).